Here is a 350-residue protein sequence, read N- to C-terminus: Protein-glutamate methylesterase/protein-glutamine glutaminase (350 aa).

The Response regulatory domain maps to 5–122 (RVLSVDDSAL…REGMLAYSEM (118 aa)). At aspartate 56 the chain carries 4-aspartylphosphate. A CheB-type methylesterase domain is found at 152–338 (LLSSEKLLVI…DLSQVVSQQM (187 aa)). Catalysis depends on residues serine 164, histidine 190, and aspartate 286.

It belongs to the CheB family. Post-translationally, phosphorylated by CheA. Phosphorylation of the N-terminal regulatory domain activates the methylesterase activity.

It is found in the cytoplasm. The catalysed reaction is [protein]-L-glutamate 5-O-methyl ester + H2O = L-glutamyl-[protein] + methanol + H(+). It catalyses the reaction L-glutaminyl-[protein] + H2O = L-glutamyl-[protein] + NH4(+). Functionally, involved in chemotaxis. Part of a chemotaxis signal transduction system that modulates chemotaxis in response to various stimuli. Catalyzes the demethylation of specific methylglutamate residues introduced into the chemoreceptors (methyl-accepting chemotaxis proteins or MCP) by CheR. Also mediates the irreversible deamidation of specific glutamine residues to glutamic acid. This Enterobacter cloacae protein is Protein-glutamate methylesterase/protein-glutamine glutaminase.